Reading from the N-terminus, the 395-residue chain is S-adenosylmethionine synthase (395 aa).

Histidine 15 contributes to the ATP binding site. Aspartate 17 is a Mg(2+) binding site. Glutamate 43 contacts K(+). Glutamate 56 and glutamine 99 together coordinate L-methionine. The segment at 99–109 (QSPDIAMGVDE) is flexible loop. ATP-binding positions include 173–175 (DGK), 239–240 (RF), aspartate 248, 254–255 (RK), alanine 271, and lysine 275. Aspartate 248 is a binding site for L-methionine. An L-methionine-binding site is contributed by lysine 279.

The protein belongs to the AdoMet synthase family. Homotetramer; dimer of dimers. Requires Mg(2+) as cofactor. K(+) is required as a cofactor.

It localises to the cytoplasm. It catalyses the reaction L-methionine + ATP + H2O = S-adenosyl-L-methionine + phosphate + diphosphate. It participates in amino-acid biosynthesis; S-adenosyl-L-methionine biosynthesis; S-adenosyl-L-methionine from L-methionine: step 1/1. Functionally, catalyzes the formation of S-adenosylmethionine (AdoMet) from methionine and ATP. The overall synthetic reaction is composed of two sequential steps, AdoMet formation and the subsequent tripolyphosphate hydrolysis which occurs prior to release of AdoMet from the enzyme. This chain is S-adenosylmethionine synthase, found in Desulforudis audaxviator (strain MP104C).